The chain runs to 246 residues: E3 ubiquitin-protein ligase MARCHF2 (246 aa).

The RING-CH-type zinc finger occupies 56–116 (DTPSDCPFCR…ELCHTEFAVE (61 aa)). Zn(2+) is bound by residues C64, C67, C80, C82, H90, C93, C106, and C109. The interval 121–246 (PLTEWLKDPG…LKKVAEETPV (126 aa)) is required for interaction with IKBKG. 2 helical membrane passes run 138-158 (LCCD…SGWL) and 175-195 (AVGL…WTLV).

Interacts with STX6; the interaction promotes MARCHF2-mediated ubiquitination and degradation of CFTR. Interacts with MARCHF3. Interacts with GOPC/CAL; the interaction leads to CFTR ubiquitination and degradation. Interacts with CFTR; the interaction leads to CFTR ubiqtuitination and degradation. Interacts (via PDZ domain) with DLG1 (via PDZ domains); the interaction leads to DLG1 ubiqtuitination and degradation. Interacts with ERGIC3. Interacts with ADRB2. Interacts with IKBKG/NEMO; during the late stages of macrophage viral and bacterial infection; the interaction leads to ubiquitination and degradation of IKBKG/NEMO. As to expression, ubiquitously expressed. Present in liver (at protein level).

The protein localises to the endoplasmic reticulum membrane. It localises to the lysosome membrane. The protein resides in the endosome membrane. It is found in the golgi apparatus membrane. Its subcellular location is the cytoplasm. The protein localises to the cell membrane. It catalyses the reaction S-ubiquitinyl-[E2 ubiquitin-conjugating enzyme]-L-cysteine + [acceptor protein]-L-lysine = [E2 ubiquitin-conjugating enzyme]-L-cysteine + N(6)-ubiquitinyl-[acceptor protein]-L-lysine.. It functions in the pathway protein modification; protein ubiquitination. Functionally, E3 ubiquitin-protein ligase that may mediate ubiquitination of TFRC and CD86, and promote their subsequent endocytosis and sorting to lysosomes via multivesicular bodies. E3 ubiquitin ligases accept ubiquitin from an E2 ubiquitin-conjugating enzyme in the form of a thioester and then directly transfer the ubiquitin to targeted substrates. Together with GOPC/CAL mediates the ubiquitination and lysosomal degradation of CFTR. Ubiquitinates and therefore mediates the degradation of DLG1. Regulates the intracellular trafficking and secretion of alpha1-antitrypsin/SERPINA1 and HP/haptoglobin via ubiquitination and degradation of the cargo receptor ERGIC3. Negatively regulates the antiviral and antibacterial immune response by repression of the NF-kB and type 1 IFN signaling pathways, via MARCHF2-mediated K48-linked polyubiquitination of IKBKG/NEMO, resulting in its proteasomal degradation. May be involved in endosomal trafficking through interaction with STX6. The protein is E3 ubiquitin-protein ligase MARCHF2 (Marchf2) of Rattus norvegicus (Rat).